Reading from the N-terminus, the 279-residue chain is NADPH-dependent 7-cyano-7-deazaguanine reductase (279 aa).

A substrate-binding site is contributed by 86-88; the sequence is IES. 88-89 provides a ligand contact to NADPH; that stretch reads SK. Residue Cys187 is the Thioimide intermediate of the active site. Residue Asp194 is the Proton donor of the active site. 226-227 lines the substrate pocket; sequence HE. 255–256 provides a ligand contact to NADPH; that stretch reads RG.

This sequence belongs to the GTP cyclohydrolase I family. QueF type 2 subfamily. As to quaternary structure, homodimer.

It is found in the cytoplasm. It catalyses the reaction 7-aminomethyl-7-carbaguanine + 2 NADP(+) = 7-cyano-7-deazaguanine + 2 NADPH + 3 H(+). It participates in tRNA modification; tRNA-queuosine biosynthesis. In terms of biological role, catalyzes the NADPH-dependent reduction of 7-cyano-7-deazaguanine (preQ0) to 7-aminomethyl-7-deazaguanine (preQ1). In Actinobacillus pleuropneumoniae serotype 7 (strain AP76), this protein is NADPH-dependent 7-cyano-7-deazaguanine reductase.